Consider the following 561-residue polypeptide: MSETINTASQFPTFEKPTVQFNEKGWGPCELPDTFKDVPYQPFSKNDRLGKICDWTSTSNNDKKYQNKYASTFGTGNQYSYYHEEDETTFHLVDTARVQKPPHQRGRFRNMRNSRSGRGRNARGGINTHGMTTLSGKNVKARDPRRGMGKKFGNRGPPPKMRESSVAVRADWASIEEMDFPRLIKLSLPNIKEGVDIVTCGTLEYYDKTYDRINVKNEKPLQKIDRIVHTVTTTDDPVIRRLSKTIGNVFATDAILATIMCSTRSNYSWDIVIEKVGEKIFMDKRDHTEFDLLTVNETSVEPPTDDDSSCNSPRNLAIEATFINHNFSQQVLKTGDQEAKFKFQESNPFISEDEDIQVASVGYRYKKWELGSDIVLVARCEHDGVLQTPSGEPQFMSIKALNEWDSKLANGVEWRQKLDTQRGAVLANELRNNACKLAKWTVQAVLAGSDQLKLGYVSRINPRDHSRHVILGTQQFKPHEFATQINLSMDNAWGILRCIIDLVMKQKDGKYLIMKDPNKPIIRLYDIPDNTFDSDDSDDGEGDDGEGFQQVYNYANNGNKI.

Residues 98–164 (VQKPPHQRGR…RGPPPKMRES (67 aa)) are disordered. Residues 100 to 121 (KPPHQRGRFRNMRNSRSGRGRN) are compositionally biased toward basic residues. T128 carries the post-translational modification Phosphothreonine. Positions 289-303 (EFDLLTVNETSVEPP) are RNA gate.

It belongs to the eIF-3 subunit D family. In terms of assembly, component of the eukaryotic translation initiation factor 3 (eIF-3) complex. The eIF-3 complex interacts with pix.

It localises to the cytoplasm. Functionally, mRNA cap-binding component of the eukaryotic translation initiation factor 3 (eIF-3) complex, which is involved in protein synthesis of a specialized repertoire of mRNAs and, together with other initiation factors, stimulates binding of mRNA and methionyl-tRNAi to the 40S ribosome. The eIF-3 complex specifically targets and initiates translation of a subset of mRNAs involved in cell proliferation. In the eIF-3 complex, eif3d specifically recognizes and binds the 7-methylguanosine cap of a subset of mRNAs. This chain is Eukaryotic translation initiation factor 3 subunit D-1, found in Drosophila ananassae (Fruit fly).